The primary structure comprises 212 residues: MSDPTIRPQSELTPGDFTAAENPFALFAEWLAEANKSEPNDPNAMALATVDPDGLPDVRMVLMKGYDEHGFVFYSHIASQKGRELAANPKAALLFHWKSLRRQIRIRGTVTPVTDTEADAYFATRPKQAQIGAWASKQSQPLESRFAFEQAIAKVTARHLIGDVPRPPGWSGWRITPSRIEFWHDRPFRLHDRIEFRRDTPDHPWTKTRLYP.

FMN contacts are provided by residues arginine 59–lysine 64, tyrosine 74–serine 75, lysine 81, and glutamine 103. Residue lysine 64 participates in substrate binding. Positions 121 and 125 each coordinate substrate. Residues glutamine 138 to serine 139 and tryptophan 183 contribute to the FMN site. Arginine 189–histidine 191 contributes to the substrate binding site. Arginine 193 lines the FMN pocket.

It belongs to the pyridoxamine 5'-phosphate oxidase family. In terms of assembly, homodimer. It depends on FMN as a cofactor.

The enzyme catalyses pyridoxamine 5'-phosphate + O2 + H2O = pyridoxal 5'-phosphate + H2O2 + NH4(+). It catalyses the reaction pyridoxine 5'-phosphate + O2 = pyridoxal 5'-phosphate + H2O2. The protein operates within cofactor metabolism; pyridoxal 5'-phosphate salvage; pyridoxal 5'-phosphate from pyridoxamine 5'-phosphate: step 1/1. It functions in the pathway cofactor metabolism; pyridoxal 5'-phosphate salvage; pyridoxal 5'-phosphate from pyridoxine 5'-phosphate: step 1/1. Its function is as follows. Catalyzes the oxidation of either pyridoxine 5'-phosphate (PNP) or pyridoxamine 5'-phosphate (PMP) into pyridoxal 5'-phosphate (PLP). The protein is Pyridoxine/pyridoxamine 5'-phosphate oxidase of Rhodopseudomonas palustris (strain TIE-1).